We begin with the raw amino-acid sequence, 577 residues long: Insulin-like growth factor 2 mRNA-binding protein 1 (577 aa).

2 consecutive RRM domains span residues 2-75 and 81-156; these read NKLY…HSVP and RKIQ…YIPD. A phosphoserine mark is found at Ser12 and Ser73. The disordered stretch occupies residues 156-190; that stretch reads DEQITQGPENGRRGGFGSRGQPRQGSPVAAGAPAK. Phosphoserine; by MTOR is present on Ser181. KH domains lie at 195 to 260, 276 to 343, 405 to 470, and 487 to 553; these read DIPL…CKMI, EVPL…EQEI, QEMV…QGRI, and KLET…QRKI. The interval 312-323 is sufficient for nuclear export; that stretch reads ISSLQDLTLYNP. The interval 485–495 is sufficient for nuclear export; the sequence is EVKLETHIRVP. The residue at position 528 (Thr528) is a Phosphothreonine.

It belongs to the RRM IMP/VICKZ family. In terms of assembly, can form homodimers and heterodimers with IGF2BP1 and IGF2BP3. Component of the coding region determinant (CRD)-mediated complex, composed of DHX9, HNRNPU, IGF2BP1, SYNCRIP and YBX1. Identified in a mRNP complex, at least composed of DHX9, DDX3X, ELAVL1, HNRNPU, IGF2BP1, ILF3, PABPC1, PCBP2, PTBP2, STAU1, STAU2, SYNCRIP and YBX1. Associates with mRNP complex. Interacts with FMR1. Component of a multisubunit autoregulatory RNP complex (ARC), at least composed of IGF2BP1, PABPC1 and CSDE1. Interacts with AGO1 and AGO2. Interacts, through domains KH3 and KH4, with PABPC1 in an RNA-independent manner. Component of a TAU mRNP complex, at least composed of IGF2BP1, ELAVL4 and G3BP. Interacts with ELAVL4 in an RNA-dependent manner. Associates with microtubules and polysomes. Interacts with ELAVL1 and MATR3. In terms of processing, phosphorylated at Ser-181 by mTORC2 cotranslationally, promoting binding to the 3'-UTR of IGF2 mRNA. Expressed in zygotes and blastocysts (at protein level). Expressed in brain, skeletal muscle, trophoblasts of placenta, oocytes and spermatogonia (at protein level). Expressed in testis and ovary. Following colon injury, expressed in the wound bed mesenchyme during the first phase of repair, probably by colonic mesenchymal stem cells (at protein level).

It localises to the nucleus. Its subcellular location is the cytoplasm. The protein localises to the perinuclear region. The protein resides in the P-body. It is found in the stress granule. It localises to the cell projection. Its subcellular location is the lamellipodium. The protein localises to the dendrite. The protein resides in the dendritic spine. It is found in the growth cone. It localises to the filopodium. Its subcellular location is the axon. Functionally, RNA-binding factor that recruits target transcripts to cytoplasmic protein-RNA complexes (mRNPs). This transcript 'caging' into mRNPs allows mRNA transport and transient storage. It also modulates the rate and location at which target transcripts encounter the translational apparatus and shields them from endonuclease attacks or microRNA-mediated degradation. Preferentially binds to N6-methyladenosine (m6A)-containing mRNAs and increases their stability. Regulates localized beta-actin/ACTB mRNA translation, a crucial process for cell polarity, cell migration and neurite outgrowth. Co-transcriptionally associates with the ACTB mRNA in the nucleus. This binding involves a conserved 54-nucleotide element in the ACTB mRNA 3'-UTR, known as the 'zipcode'. The RNP thus formed is exported to the cytoplasm, binds to a motor protein and is transported along the cytoskeleton to the cell periphery. During transport, prevents ACTB mRNA from being translated into protein. When the RNP complex reaches its destination near the plasma membrane, IGF2BP1 is phosphorylated. This releases the mRNA, allowing ribosomal 40S and 60S subunits to assemble and initiate ACTB protein synthesis. Monomeric ACTB then assembles into the subcortical actin cytoskeleton. During neuronal development, key regulator of neurite outgrowth, growth cone guidance and neuronal cell migration, presumably through the spatiotemporal fine tuning of protein synthesis, such as that of ACTB. May regulate mRNA transport to activated synapses. Binds to the 3'-UTR of CD44 mRNA and stabilizes it, hence promotes cell adhesion and invadopodia formation in cancer cells. Binds to the oncofetal H19 transcript and regulates its localization. Binds to and stabilizes BTRC/FBW1A mRNA. Binds to the adenine-rich autoregulatory sequence (ARS) located in PABPC1 mRNA and represses its translation. PABPC1 mRNA-binding is stimulated by PABPC1 protein. Prevents BTRC/FBW1A mRNA degradation by disrupting microRNA-dependent interaction with AGO2. During cellular stress, such as oxidative stress or heat shock, stabilizes target mRNAs that are recruited to stress granules, including CD44, IGF2, MAPK4, MYC, PTEN, RAPGEF2 and RPS6KA5 transcripts. Interacts with GAP43 transcript and transports it to axons. Binds to the 3'-UTR of IGF2 mRNA by a mechanism of cooperative and sequential dimerization and regulates IGF2 mRNA subcellular localization and translation. Binds to MYC mRNA, in the coding region instability determinant (CRD) of the open reading frame (ORF), hence prevents MYC cleavage by endonucleases and possibly microRNA targeting to MYC-CRD. Binding to MYC mRNA is enhanced by m6A-modification of the CRD. Binds to and stabilizes ABCB1/MDR-1 mRNA. Binds to the neuron-specific TAU mRNA and regulates its localization. Plays a direct role in the transport and translation of transcripts required for axonal regeneration in adult sensory neurons. During interstinal wound repair, interacts with and stabilizes PTGS2 transcript. PTGS2 mRNA stabilization may be crucial for colonic mucosal wound healing. The sequence is that of Insulin-like growth factor 2 mRNA-binding protein 1 (Igf2bp1) from Mus musculus (Mouse).